The chain runs to 409 residues: D-galactonate dehydratase family member Achl_0790 (409 aa).

Mg(2+) is bound at residue aspartate 217. Histidine 219 provides a ligand contact to D-arabinonate. Residues glutamate 243 and glutamate 269 each coordinate Mg(2+). D-arabinonate is bound by residues glutamate 269, arginine 290, histidine 319, and glutamate 346.

Belongs to the mandelate racemase/muconate lactonizing enzyme family. GalD subfamily.

Functionally, has no detectable activity with D-mannonate and with a panel of 70 other acid sugars (in vitro), in spite of the conservation of the residues that are expected to be important for catalytic activity and cofactor binding. May have evolved a divergent function. This is D-galactonate dehydratase family member Achl_0790 from Pseudarthrobacter chlorophenolicus (strain ATCC 700700 / DSM 12829 / CIP 107037 / JCM 12360 / KCTC 9906 / NCIMB 13794 / A6) (Arthrobacter chlorophenolicus).